A 131-amino-acid chain; its full sequence is Profilin-5 (131 aa).

Cysteines 13 and 115 form a disulfide. The Involved in PIP2 interaction signature appears at 81–97 (AVIRGKKGAGGITVKKT). Position 111 is a phosphothreonine (T111).

This sequence belongs to the profilin family. As to quaternary structure, occurs in many kinds of cells as a complex with monomeric actin in a 1:1 ratio. Post-translationally, phosphorylated by MAP kinases.

It is found in the cytoplasm. It localises to the cytoskeleton. Binds to actin and affects the structure of the cytoskeleton. At high concentrations, profilin prevents the polymerization of actin, whereas it enhances it at low concentrations. The sequence is that of Profilin-5 from Corylus avellana (European hazel).